The chain runs to 734 residues: Photosystem I P700 chlorophyll a apoprotein A2 (734 aa).

Transmembrane regions (helical) follow at residues 46 to 69, 135 to 158, 175 to 199, 273 to 291, 330 to 353, 369 to 395, 417 to 439, and 517 to 535; these read IFASHFGQLAIIFLWTSGNLFHVA, LYTGALFLLFLSAVSLIAGWLHLQ, LNHHLSGLFGVSSLAWTGHLVHVAI, IAHHHLAIALIFLVAGHMY, VHFQLGLALASLGVITSLVAQHMY, AALYTHHQYIAGFIMTGAFAHGAIFFI, AIISHLSWASLFLGFHTLGLYVH, and FLVHHAIALGLHTTTLILV. Residues C559 and C568 each coordinate [4Fe-4S] cluster. 2 consecutive transmembrane segments (helical) span residues 575–596 and 643–665; these read AFYLAVFWMLNTIGWVTFYWHW and LSVWAWMFLFGHLVWATGFMFLI. Chlorophyll a contacts are provided by H654, M662, and Y670. W671 is a phylloquinone binding site. A helical transmembrane segment spans residues 707–727; that stretch reads LVGLAHFSVGYIFTYAAFLIA.

The protein belongs to the PsaA/PsaB family. In terms of assembly, the PsaA/B heterodimer binds the P700 chlorophyll special pair and subsequent electron acceptors. PSI consists of a core antenna complex that captures photons, and an electron transfer chain that converts photonic excitation into a charge separation. The eukaryotic PSI reaction center is composed of at least 11 subunits. It depends on P700 is a chlorophyll a/chlorophyll a' dimer, A0 is one or more chlorophyll a, A1 is one or both phylloquinones and FX is a shared 4Fe-4S iron-sulfur center. as a cofactor.

The protein resides in the plastid. It localises to the chloroplast thylakoid membrane. It catalyses the reaction reduced [plastocyanin] + hnu + oxidized [2Fe-2S]-[ferredoxin] = oxidized [plastocyanin] + reduced [2Fe-2S]-[ferredoxin]. Functionally, psaA and PsaB bind P700, the primary electron donor of photosystem I (PSI), as well as the electron acceptors A0, A1 and FX. PSI is a plastocyanin-ferredoxin oxidoreductase, converting photonic excitation into a charge separation, which transfers an electron from the donor P700 chlorophyll pair to the spectroscopically characterized acceptors A0, A1, FX, FA and FB in turn. Oxidized P700 is reduced on the lumenal side of the thylakoid membrane by plastocyanin. This is Photosystem I P700 chlorophyll a apoprotein A2 from Platanus occidentalis (Sycamore).